The sequence spans 135 residues: MVLESIARVIKVQLPAYLKRLPIPDSIAGFIRLTVSEWLRLLPFLGVLALLGYLAIRPFLLKKKQQKDSLINLKIQKENPKVVNEINIEDLHLAKAAYCRCWRSKTFPVCDGSHNKHNELTGDNVGPLILKKKEV.

Topologically, residues 1–37 are lumenal; the sequence is MVLESIARVIKVQLPAYLKRLPIPDSIAGFIRLTVSE. Residues 38–60 traverse the membrane as a helical segment; the sequence is WLRLLPFLGVLALLGYLAIRPFL. Over 61-135 the chain is Cytoplasmic; sequence LKKKQQKDSL…GPLILKKKEV (75 aa). Positions 99, 101, 110, and 114 each coordinate [2Fe-2S] cluster.

The protein belongs to the CISD protein family. CISD2 subfamily. In terms of assembly, homodimer. Requires [2Fe-2S] cluster as cofactor.

The protein localises to the endoplasmic reticulum membrane. It is found in the mitochondrion outer membrane. Regulator of autophagy that contributes to antagonize becn1-mediated cellular autophagy at the endoplasmic reticulum. Participates in the interaction of bcl2 with becn1 and is required for bcl2-mediated depression of endoplasmic reticulum Ca(2+) stores during autophagy. In Xenopus laevis (African clawed frog), this protein is CDGSH iron-sulfur domain-containing protein 2A (cisd2-a).